The primary structure comprises 566 residues: Alpha-N-acetylgalactosaminide alpha-2,6-sialyltransferase 1 (566 aa).

At 1–16 (MGFLIRRLPKDSRIFR) the chain is on the cytoplasmic side. Residues 17–37 (WLLILTVFSFIITSFSALFGM) traverse the membrane as a helical; Signal-anchor for type II membrane protein segment. Residues 38–566 (EKSIFRQLKI…ENIMKLYQRS (529 aa)) lie on the Lumenal side of the membrane. 2 N-linked (GlcNAc...) asparagine glycosylation sites follow: N66 and N132. A disordered region spans residues 138–161 (ASVVERTKEKTTARPVPGVGEADG). N192 is a glycosylation site (N-linked (GlcNAc...) asparagine). Copy 1 of the repeat occupies 247-254 (SSSPVSTC). Positions 247–337 (SSSPVSTCSE…ANSSSNVSTC (91 aa)) are 2 X 8 AA repeats of S-S-S-X-V-S-T-C. Intrachain disulfides connect C254/C337 and C340/C508. Residues N275, N286, N306, N329, and N333 are each glycosylated (N-linked (GlcNAc...) asparagine). Repeat 2 spans residues 330-337 (SSSNVSTC).

It belongs to the glycosyltransferase 29 family. In terms of tissue distribution, heart, kidney, testes, brain, liver and lung.

The protein localises to the golgi apparatus membrane. It carries out the reaction a beta-D-galactosyl-(1-&gt;3)-N-acetyl-alpha-D-galactosaminyl derivative + CMP-N-acetyl-beta-neuraminate = a beta-D-galactosyl-(1-&gt;3)-[N-acetyl-alpha-neuraminyl-(2-&gt;6)]-N-acetyl-alpha-D-galactosaminyl derivative + CMP + H(+). The catalysed reaction is a 3-O-[N-acetyl-alpha-D-galactosaminyl]-L-seryl-[protein] + CMP-N-acetyl-beta-neuraminate = a 3-O-[N-acetyl-alpha-neuraminosyl-(2-&gt;6)-N-acetyl-alpha-D-galactosaminyl]-L-seryl-[protein] + CMP + H(+). It catalyses the reaction a 3-O-[N-acetyl-alpha-D-galactosaminyl]-L-threonyl-[protein] + CMP-N-acetyl-beta-neuraminate = a 3-O-[N-acetyl-alpha-neuraminosyl-(2-&gt;6)-N-acetyl-alpha-D-galactosaminyl]-L-threonyl-[protein] + CMP + H(+). The enzyme catalyses a 3-O-[beta-D-galactosyl-(1-&gt;3)-N-acetyl-alpha-D-galactosaminyl]-L-seryl-[protein] + CMP-N-acetyl-beta-neuraminate = a 3-O-{beta-D-galactosyl-(1-&gt;3)-[N-acetyl-alpha-neuraminosyl-(2-&gt;6)]-N-acetyl-alpha-D-galactosaminyl}-L-seryl-[protein] + CMP + H(+). It carries out the reaction a 3-O-[beta-D-galactosyl-(1-&gt;3)-N-acetyl-alpha-D-galactosaminyl]-L-threonyl-[protein] + CMP-N-acetyl-beta-neuraminate = a 3-O-{beta-D-galactosyl-(1-&gt;3)-[N-acetyl-alpha-neuraminosyl-(2-&gt;6)]-N-acetyl-alpha-D-galactosaminyl}-L-threonyl-[protein] + CMP + H(+). The catalysed reaction is a 3-O-[N-acetyl-alpha-neuraminyl-(2-&gt;3)-beta-D-galactosyl-(1-&gt;3)-N-acetyl-alpha-D-galactosaminyl]-L-threonyl-[protein] + CMP-N-acetyl-beta-neuraminate = a 3-O-{alpha-Neu5Ac-(2-&gt;3)-beta-D-Gal-(1-&gt;3)-[alpha-Neu5Ac-(2-&gt;6)]-alpha-D-GalNAc}-L-threonyl-[protein] + CMP + H(+). It functions in the pathway protein modification; protein glycosylation. Its function is as follows. Protein sialyltransferase specifically expressed in goblet cells that plays a key role in intestinal host-commensal homeostasis. Conjugates sialic acid with an alpha-2-6 linkage to N-acetylgalactosamine (GalNAc) glycan chains linked to serine or threonine in glycoproteins. Generates sialylated T and Tn antigens.. In Gallus gallus (Chicken), this protein is Alpha-N-acetylgalactosaminide alpha-2,6-sialyltransferase 1 (ST6GALNAC1).